The following is a 500-amino-acid chain: Polyenoic fatty acid isomerase (500 aa).

The signal sequence occupies residues 1 to 21; that stretch reads MSLNRVLHIFLIAYLACTALT.

Homodimer. It depends on an oxidized flavin as a cofactor. Post-translationally, glycosylated.

It carries out the reaction (5Z,8Z,11Z,14Z,17Z)-eicosapentaenoate = (5Z,7E,9E,14Z,17Z)-icosapentaenoate. Its function is as follows. Involved in the biosynthesis of conjugated triene-containing fatty acids. Catalyzes the isomerization of a wide range of substrates containing three or more methylene interrupted olefins into a Z,E,E conjugated triene functionality. May be involved in a stress tolerance mechanism as response to intertidal habitats with direct sunlight, desiccation and high temperature. In vitro substrates include arachidonic acid ((5Z,8Z,11Z,14Z)-eicosatetraenoic acid), EPA ((5Z,8Z, 11Z,14Z,17Z)-eicosapentaenoic acid), DHA ((4Z,7Z,10Z,13Z,16Z,19Z)-docosahexenoic acid), adrenic acid ((7Z,10Z,13Z,16Z)-docosatetraenoic acid), anandamide (arachidonyl-N-ethanolamide) and eicosatrienoic acid ((5Z,8Z,11Z)-eicosatrienoic acid). Gamma-linolenic acid (18:3 6Z,9Z,12Z) and dihomo-gamma-linolenic acid (20:3 8Z,11Z,14Z) are transformed into mixtures of conjugated diene and triene fatty acids, linoleic acid is only transformed to a conjugated diene. In Ptilota filicina (Red alga), this protein is Polyenoic fatty acid isomerase.